The sequence spans 293 residues: 4-hydroxy-tetrahydrodipicolinate synthase (293 aa).

T47 is a binding site for pyruvate. Residue Y136 is the Proton donor/acceptor of the active site. Catalysis depends on K164, which acts as the Schiff-base intermediate with substrate. Residue I206 participates in pyruvate binding.

It belongs to the DapA family. Homotetramer; dimer of dimers.

The protein localises to the cytoplasm. The catalysed reaction is L-aspartate 4-semialdehyde + pyruvate = (2S,4S)-4-hydroxy-2,3,4,5-tetrahydrodipicolinate + H2O + H(+). The protein operates within amino-acid biosynthesis; L-lysine biosynthesis via DAP pathway; (S)-tetrahydrodipicolinate from L-aspartate: step 3/4. Its function is as follows. Catalyzes the condensation of (S)-aspartate-beta-semialdehyde [(S)-ASA] and pyruvate to 4-hydroxy-tetrahydrodipicolinate (HTPA). This chain is 4-hydroxy-tetrahydrodipicolinate synthase, found in Listeria innocua serovar 6a (strain ATCC BAA-680 / CLIP 11262).